Reading from the N-terminus, the 317-residue chain is Olfactory receptor 2B11 (317 aa).

Topologically, residues 1–29 (MKSDNHSFLGDSPKAFILLGVSDRPWLEL) are extracellular. Asn5 carries an N-linked (GlcNAc...) asparagine glycan. The helical transmembrane segment at 30–53 (PLFVVLLLSYVLAMLGNVAIILAS) threads the bilayer. Over 54-61 (RVDPQLHS) the chain is Cytoplasmic. A helical transmembrane segment spans residues 62–83 (PMYIFLSHLSFLDLCYTTTTVP). Residues 84–104 (QMLVNMGSSQKTISYGGCTVQ) are Extracellular-facing. A disulfide bridge connects residues Cys101 and Cys193. Residues 105–124 (YAVFHWLGCTECIVLAAMAL) traverse the membrane as a helical segment. Over 125 to 143 (DRYVAICKPLHYAVLMHRA) the chain is Cytoplasmic. A helical transmembrane segment spans residues 144-162 (LCQQLVALAWLSGFGNSFV). Topologically, residues 163–199 (QVVLTVQLPFCGRQVLNNFFCEVPAVIKLSCADTAVN) are extracellular. N-linked (GlcNAc...) asparagine glycosylation occurs at Asn199. The helical transmembrane segment at 200–223 (DTILAVLVAFFVLVPLALILLSYG) threads the bilayer. At 224–240 (FIARAVLRIQSSKGRHK) the chain is on the cytoplasmic side. Residues 241-263 (AFGTCSSHLMIVSLFYLPAIYMY) traverse the membrane as a helical segment. Topologically, residues 264–276 (LQPPSSYSQEQGK) are extracellular. Residues 277–296 (FISLFYSIITPTLNPFTYTL) form a helical membrane-spanning segment. The Cytoplasmic portion of the chain corresponds to 297 to 317 (RNKDMKGALRRLLARIWRLCG).

Belongs to the G-protein coupled receptor 1 family.

Its subcellular location is the cell membrane. Odorant receptor. This is Olfactory receptor 2B11 (OR2B11) from Homo sapiens (Human).